The sequence spans 350 residues: Cytochrome c biogenesis protein CcsA (350 aa).

8 helical membrane passes run Asn-23–Pro-43, Leu-47–Leu-67, Leu-82–His-102, Trp-108–Leu-128, Val-153–Ile-173, Leu-258–Asn-278, Trp-293–Trp-313, and Ala-319–Leu-339.

It belongs to the CcmF/CycK/Ccl1/NrfE/CcsA family. In terms of assembly, may interact with ccs1.

Its subcellular location is the cellular thylakoid membrane. Required during biogenesis of c-type cytochromes (cytochrome c6 and cytochrome f) at the step of heme attachment. The chain is Cytochrome c biogenesis protein CcsA from Synechococcus sp. (strain JA-2-3B'a(2-13)) (Cyanobacteria bacterium Yellowstone B-Prime).